The following is a 126-amino-acid chain: Small ribosomal subunit protein bS6 (126 aa).

It belongs to the bacterial ribosomal protein bS6 family.

Its function is as follows. Binds together with bS18 to 16S ribosomal RNA. The chain is Small ribosomal subunit protein bS6 from Actinobacillus succinogenes (strain ATCC 55618 / DSM 22257 / CCUG 43843 / 130Z).